The following is a 76-amino-acid chain: UPF0154 protein Exig_1099 (76 aa).

A helical transmembrane segment spans residues 4–24; the sequence is WIWILIALLCLVAGVALGFYI. Positions 54–76 are disordered; sequence KPSQKKVNQVMRSMSGSMKSPKK.

This sequence belongs to the UPF0154 family.

It localises to the cell membrane. This chain is UPF0154 protein Exig_1099, found in Exiguobacterium sibiricum (strain DSM 17290 / CCUG 55495 / CIP 109462 / JCM 13490 / 255-15).